Here is a 161-residue protein sequence, read N- to C-terminus: PHD finger-containing protein 4 (161 aa).

Residues 30–80 (KKPCEVCGSNANDHAIMTCFLCRDTREHIYCARVHLRSVPRMWICEECRMN) form a PHD-type zinc finger. The Zn(2+) site is built by cysteine 33, cysteine 36, cysteine 48, cysteine 51, histidine 57, cysteine 60, cysteine 74, and cysteine 77. The span at 114 to 132 (TMTSSDSGNQISATHQQPP) shows a compositional bias: polar residues. Residues 114 to 161 (TMTSSDSGNQISATHQQPPQAHASPVAVPMDTSSSDNQQPPSDSESAI) form a disordered region. Positions 146–161 (SSSDNQQPPSDSESAI) are enriched in low complexity.

As to quaternary structure, interacts directly with AIPP3/BDT1.

Together with AIPP3/BDT1, cooperates to form a BAH-PHD bivalent histone reader complex able to read histone H3 lysine 27 trimethylation (H3K27me3) histone marks in order to regulate transcription, especially to prevent early flowering; promotes AIPP3/BDT1 binding to H3K27me3. This is PHD finger-containing protein 4 from Arabidopsis thaliana (Mouse-ear cress).